The primary structure comprises 274 residues: Momilactone A synthase (274 aa).

Belongs to the short-chain dehydrogenases/reductases (SDR) family.

The enzyme catalyses 3beta-hydroxy-9beta-pimara-7,15-dien-19,6beta-olide + NAD(+) = momilactone A + NADH + H(+). It catalyses the reaction 3beta-hydroxy-9beta-pimara-7,15-dien-19,6beta-olide + NADP(+) = momilactone A + NADPH + H(+). Involved in momilactone phytoalexins biosynthesis. Catalyzes the last step of momilactone A biosynthesis. The chain is Momilactone A synthase from Oryza sativa subsp. japonica (Rice).